The chain runs to 327 residues: Putative HTH-type transcriptional regulatory protein Mevan_1514 (327 aa).

The HTH cro/C1-type domain occupies 128–189; it reads LKETREKLNI…IKGINITDYF (62 aa). The segment at residues 139–158 is a DNA-binding region (H-T-H motif); the sequence is VGELAEFSRVSRKTIYKYEQ.

This is Putative HTH-type transcriptional regulatory protein Mevan_1514 from Methanococcus vannielii (strain ATCC 35089 / DSM 1224 / JCM 13029 / OCM 148 / SB).